We begin with the raw amino-acid sequence, 341 residues long: Ketol-acid reductoisomerase (NADP(+)) (341 aa).

Positions M1–T182 constitute a KARI N-terminal Rossmann domain. Residues Y25 to Q28, K48, S51, S53, and D83 to Q86 each bind NADP(+). H108 is an active-site residue. Position 134 (G134) interacts with NADP(+). The 146-residue stretch at T183–Q328 folds into the KARI C-terminal knotted domain. 4 residues coordinate Mg(2+): D191, E195, E227, and E231. S252 is a substrate binding site.

This sequence belongs to the ketol-acid reductoisomerase family. Mg(2+) serves as cofactor.

It catalyses the reaction (2R)-2,3-dihydroxy-3-methylbutanoate + NADP(+) = (2S)-2-acetolactate + NADPH + H(+). The enzyme catalyses (2R,3R)-2,3-dihydroxy-3-methylpentanoate + NADP(+) = (S)-2-ethyl-2-hydroxy-3-oxobutanoate + NADPH + H(+). Its pathway is amino-acid biosynthesis; L-isoleucine biosynthesis; L-isoleucine from 2-oxobutanoate: step 2/4. It participates in amino-acid biosynthesis; L-valine biosynthesis; L-valine from pyruvate: step 2/4. In terms of biological role, involved in the biosynthesis of branched-chain amino acids (BCAA). Catalyzes an alkyl-migration followed by a ketol-acid reduction of (S)-2-acetolactate (S2AL) to yield (R)-2,3-dihydroxy-isovalerate. In the isomerase reaction, S2AL is rearranged via a Mg-dependent methyl migration to produce 3-hydroxy-3-methyl-2-ketobutyrate (HMKB). In the reductase reaction, this 2-ketoacid undergoes a metal-dependent reduction by NADPH to yield (R)-2,3-dihydroxy-isovalerate. The chain is Ketol-acid reductoisomerase (NADP(+)) from Pseudarthrobacter chlorophenolicus (strain ATCC 700700 / DSM 12829 / CIP 107037 / JCM 12360 / KCTC 9906 / NCIMB 13794 / A6) (Arthrobacter chlorophenolicus).